The following is a 327-amino-acid chain: Phenylalanine--tRNA ligase alpha subunit (327 aa).

Glu-252 lines the Mg(2+) pocket.

Belongs to the class-II aminoacyl-tRNA synthetase family. Phe-tRNA synthetase alpha subunit type 1 subfamily. Tetramer of two alpha and two beta subunits. The cofactor is Mg(2+).

The protein resides in the cytoplasm. The enzyme catalyses tRNA(Phe) + L-phenylalanine + ATP = L-phenylalanyl-tRNA(Phe) + AMP + diphosphate + H(+). The polypeptide is Phenylalanine--tRNA ligase alpha subunit (Shewanella sp. (strain MR-7)).